The sequence spans 196 residues: MAEKKEKVKPTEQQKARLENTYKDKVVPALMERFKYKNIMMVPRLTKISVNIGVGEAAAEPKLLETAIQELSQITGQKPQIRKARKAISNFKLREGQAIGCRVTMRKKYMYEFLERFVTLAVPRIRDFRGLSTTSFDGRGNYSVGVREQIIFPEIDIDKVPRIQGMDISFVTTAKTDEEAFALLSELGMPFRKKNN.

The protein belongs to the universal ribosomal protein uL5 family. Part of the 50S ribosomal subunit; part of the 5S rRNA/L5/L18/L25 subcomplex. Contacts the 5S rRNA and the P site tRNA. Forms a bridge to the 30S subunit in the 70S ribosome.

Functionally, this is one of the proteins that bind and probably mediate the attachment of the 5S RNA into the large ribosomal subunit, where it forms part of the central protuberance. In the 70S ribosome it contacts protein S13 of the 30S subunit (bridge B1b), connecting the 2 subunits; this bridge is implicated in subunit movement. Contacts the P site tRNA; the 5S rRNA and some of its associated proteins might help stabilize positioning of ribosome-bound tRNAs. The protein is Large ribosomal subunit protein uL5 of Chlorobium phaeobacteroides (strain BS1).